Reading from the N-terminus, the 462-residue chain is NEDD8-activating enzyme E1 catalytic subunit (462 aa).

The segment at 52–69 is interaction with ube2m N-terminus; that stretch reads HPDFEASTESLQFLLDTC. ATP contacts are provided by residues 99–123 and 147–170; these read DMDT…GRPK and IQDL…SVIA. Interaction with ube2m N-terminus regions lie at residues 156-160 and 191-216; these read RQFHI and PSSI…LPGM. The tract at residues 226-228 is interaction with nedd8; it reads LYP. Cysteine 236 functions as the Glycyl thioester intermediate in the catalytic mechanism. Interaction with nae1 regions lie at residues 241–247 and 291–294; these read MPRLPEH and FNIT. An interaction with ube2m N-terminus region spans residues 330–337; it reads IATSAYVP. The tract at residues 351–356 is interaction with nedd8; it reads YTYTFE. Residues 367–462 form an interaction with ube2m core domain region; sequence SQVPQDMQFT…TVLFKLKFIS (96 aa).

The protein belongs to the ubiquitin-activating E1 family. UBA3 subfamily. Heterodimer of uba3 and nae1. Interacts with nedd8, ube2f and ube2m.

It carries out the reaction ATP + [NEDD8 protein] + [E1 NEDD8-activating enzyme]-L-cysteine = AMP + diphosphate + [E1 NEDD8-activating enzyme]-S-[NEDD8 protein]-yl-L-cysteine.. The protein operates within protein modification; protein neddylation. Functionally, catalytic subunit of the dimeric uba3-nae1 E1 enzyme. E1 activates nedd8 by first adenylating its C-terminal glycine residue with ATP, thereafter linking this residue to the side chain of the catalytic cysteine, yielding a nedd8-uba3 thioester and free AMP. E1 finally transfers nedd8 to the catalytic cysteine of ube2m. The chain is NEDD8-activating enzyme E1 catalytic subunit (uba3) from Danio rerio (Zebrafish).